The chain runs to 132 residues: T-cell receptor alpha chain V region 2B4 (132 aa).

The signal sequence occupies residues 1-20; sequence MKSLSVSLVVLWLLLNWVNS. The v segment stretch occupies residues 21–113; the sequence is QQNVQQSPES…SALYLCAVTL (93 aa). An N-linked (GlcNAc...) asparagine glycan is attached at Asn42. The segment at 114 to 117 is d segment; the sequence is YGGS. Positions 118–132 are j segment; that stretch reads GNKLIFGTGTLLSVK.

This chain is T-cell receptor alpha chain V region 2B4, found in Mus musculus (Mouse).